The chain runs to 397 residues: Succinate--CoA ligase [ADP-forming] subunit beta (397 aa).

The ATP-grasp domain maps to 9–254; that stretch reads KALLKGYGAP…ETEEDAKEIE (246 aa). ATP-binding positions include K46, 53 to 55, E109, A112, and E117; that span reads GRG. N209 and D223 together coordinate Mg(2+). Residues N274 and 331 to 333 contribute to the substrate site; that span reads GIM.

Belongs to the succinate/malate CoA ligase beta subunit family. Heterotetramer of two alpha and two beta subunits. It depends on Mg(2+) as a cofactor.

It catalyses the reaction succinate + ATP + CoA = succinyl-CoA + ADP + phosphate. The catalysed reaction is GTP + succinate + CoA = succinyl-CoA + GDP + phosphate. The protein operates within carbohydrate metabolism; tricarboxylic acid cycle; succinate from succinyl-CoA (ligase route): step 1/1. In terms of biological role, succinyl-CoA synthetase functions in the citric acid cycle (TCA), coupling the hydrolysis of succinyl-CoA to the synthesis of either ATP or GTP and thus represents the only step of substrate-level phosphorylation in the TCA. The beta subunit provides nucleotide specificity of the enzyme and binds the substrate succinate, while the binding sites for coenzyme A and phosphate are found in the alpha subunit. In Rhizobium johnstonii (strain DSM 114642 / LMG 32736 / 3841) (Rhizobium leguminosarum bv. viciae), this protein is Succinate--CoA ligase [ADP-forming] subunit beta.